We begin with the raw amino-acid sequence, 446 residues long: tRNA-2-methylthio-N(6)-dimethylallyladenosine synthase (446 aa).

One can recognise an MTTase N-terminal domain in the interval 5–121 (RRFYIQTFGC…LPSLIDDAAS (117 aa)). Cys14, Cys50, Cys84, Cys157, Cys161, and Cys164 together coordinate [4Fe-4S] cluster. A Radical SAM core domain is found at 143 to 373 (REGRISAFIP…IDLQQEISAE (231 aa)). A TRAM domain is found at 376 to 439 (RRQVGTVAEV…SATLSGSREG (64 aa)).

It belongs to the methylthiotransferase family. MiaB subfamily. In terms of assembly, monomer. Requires [4Fe-4S] cluster as cofactor.

It localises to the cytoplasm. It catalyses the reaction N(6)-dimethylallyladenosine(37) in tRNA + (sulfur carrier)-SH + AH2 + 2 S-adenosyl-L-methionine = 2-methylsulfanyl-N(6)-dimethylallyladenosine(37) in tRNA + (sulfur carrier)-H + 5'-deoxyadenosine + L-methionine + A + S-adenosyl-L-homocysteine + 2 H(+). In terms of biological role, catalyzes the methylthiolation of N6-(dimethylallyl)adenosine (i(6)A), leading to the formation of 2-methylthio-N6-(dimethylallyl)adenosine (ms(2)i(6)A) at position 37 in tRNAs that read codons beginning with uridine. The sequence is that of tRNA-2-methylthio-N(6)-dimethylallyladenosine synthase from Chlorobium luteolum (strain DSM 273 / BCRC 81028 / 2530) (Pelodictyon luteolum).